A 64-amino-acid chain; its full sequence is Small ribosomal subunit protein bS21 (64 aa).

Belongs to the bacterial ribosomal protein bS21 family.

This Amoebophilus asiaticus (strain 5a2) protein is Small ribosomal subunit protein bS21.